A 420-amino-acid polypeptide reads, in one-letter code: 5'-deoxyadenosine deaminase (420 aa).

Zn(2+) contacts are provided by histidine 55 and histidine 57. Residues glutamate 84 and histidine 176 each contribute to the substrate site. Histidine 203 provides a ligand contact to Zn(2+). Substrate-binding residues include glutamate 206 and aspartate 292. A Zn(2+)-binding site is contributed by aspartate 292.

The protein belongs to the metallo-dependent hydrolases superfamily. MTA/SAH deaminase family. Homotetramer. Zn(2+) is required as a cofactor.

It carries out the reaction 5'-deoxyadenosine + H2O + H(+) = 5'-deoxyinosine + NH4(+). The enzyme catalyses S-adenosyl-L-homocysteine + H2O + H(+) = S-inosyl-L-homocysteine + NH4(+). It catalyses the reaction S-methyl-5'-thioadenosine + H2O + H(+) = S-methyl-5'-thioinosine + NH4(+). The catalysed reaction is adenosine + H2O + H(+) = inosine + NH4(+). The protein operates within amino-acid biosynthesis; S-adenosyl-L-methionine biosynthesis. Catalyzes the deamination of three SAM-derived enzymatic products, namely 5'-deoxyadenosine, S-adenosyl-L-homocysteine, and 5'-methylthioadenosine, to produce the inosine analogs. Can also deaminate adenosine. The preferred substrate for this enzyme is 5'-deoxyadenosine, but all these substrates are efficiently deaminated. Likely functions in a S-adenosyl-L-methionine (SAM) recycling pathway from S-adenosyl-L-homocysteine (SAH) produced from SAM-dependent methylation reactions. May also be involved in the recycling of 5'-deoxyadenosine, whereupon the 5'-deoxyribose moiety of 5'-deoxyinosine is further metabolized to deoxyhexoses used for the biosynthesis of aromatic amino acids in methanogens. In Methanocaldococcus jannaschii (strain ATCC 43067 / DSM 2661 / JAL-1 / JCM 10045 / NBRC 100440) (Methanococcus jannaschii), this protein is 5'-deoxyadenosine deaminase.